We begin with the raw amino-acid sequence, 427 residues long: MKLLKRLVSVFAIVLAVGSNAFAGDEVRIVIDEGVDGARPIAVVPFVGSAPEDISKIVADDLRNSGKFNPIAVSQMPQRPTSAAEVNPEAWSNIGIDAIVIGQVVPSGNGYSITYQLIDTVGASGTPGTVLMQNSYTVTNKWLRYGAHTVSDEVFEKLTAIRGAFRTRIAYVVQKNGGSQPYEVRVADYDGYNQFIVNRSAQPIMSPAWSPDGQRLAYVSFENKKSQLVVQDLNFGARKVVASFQGHNGAPAFSPDGSRLAFASSRDGVLNIYVMGANGGTPTQLTSGAGNNTEPAWSPDGNSILFTSDRSGSPQVYRMDASGGSATVVGGRGSAQISADGKTLVMINGNNNVVKQDLTTGVSEVLSTSFLGESPSLSPNGIMIIYSSTQGLGKVLQLVSADGRFKASLPGSDGQVKFPAWSPYLTK.

Residues Met1–Ala23 form the signal peptide.

This sequence belongs to the TolB family. The Tol-Pal system is composed of five core proteins: the inner membrane proteins TolA, TolQ and TolR, the periplasmic protein TolB and the outer membrane protein Pal. They form a network linking the inner and outer membranes and the peptidoglycan layer.

The protein localises to the periplasm. Functionally, part of the Tol-Pal system, which plays a role in outer membrane invagination during cell division and is important for maintaining outer membrane integrity. This Haemophilus influenzae (strain PittEE) protein is Tol-Pal system protein TolB.